The sequence spans 214 residues: Dimethylamine corrinoid protein 2 (214 aa).

Positions 1 to 91 constitute a B12-binding N-terminal domain; it reads MATKEELIQE…DMPAGAATKK (91 aa). The B12-binding domain maps to 92-214; it reads LGVIVNGTVE…AVAKAKELLL (123 aa). H105 lines the methylcob(III)alamin pocket.

The protein belongs to the methylamine corrinoid protein family.

Its pathway is one-carbon metabolism; methanogenesis from dimethylamine. In terms of biological role, acts as a methyl group carrier between MtbB and MtbA. The protein is Dimethylamine corrinoid protein 2 (mtbC2) of Methanosarcina mazei (strain ATCC BAA-159 / DSM 3647 / Goe1 / Go1 / JCM 11833 / OCM 88) (Methanosarcina frisia).